Here is a 642-residue protein sequence, read N- to C-terminus: MPVITLPDGSKREFANPVSTLDVAADIGPGLAKACIAGRVNGELKDACDIIDTDSELSIITAKDEEGVEILRHSCAHLLGHAFKQLWPEAKMAIGPVIDNGFYYDIDLDHKLTQEDIDALQKRMTQLAKTNYKVEKRVGSWQVARDTFEARGETYKMEVLDENISKDDQPALYHHEEYVDMCRGPHVPNMKFCQNFKLMSVAGAYWRGNSDNKMLQRVYGTAWADKKALKVHLNRLEEAAKRDHRKIGKQLDLYHMQEEAPGMVFWHNDGWSLFLELEKFIRQKLGQYTYQEVKGPLMMDRVLWERSGHWDKYADAMFTTNSENREYAIKPMNCPGHVQIFNQGLKSYRDLPLRMAEFGCCHRNEPSGSLHGLMRVRGFTQDDAHVFCTEDQVQQEVSACIKMVYDTYETFGFKDIVVKLSTRPEKRIGDDDMWDRSEEALKQALTANGIAYEILPGEGAFYGPKIEFTLHDCLDRAWQCGTVQLDYALPGRLGATYVAEDNSRQTPVMIHRAILGSLERFLGILIEEYAGKFPTWLAPMQVVVMNITDKQSDYVDEVVNIFKESGIRASKDLRNEKIGFKIREHTLRRVPYLLVVGDQEMDNKEVAVRTRDGVDLGKMRIEDFASKINEQISLRSLNLLED.

In terms of domain architecture, TGS spans 1–61 (MPVITLPDGS…DTDSELSIIT (61 aa)). A catalytic region spans residues 243–534 (DHRKIGKQLD…LIEEYAGKFP (292 aa)). Zn(2+) is bound by residues Cys334, His385, and His511.

Belongs to the class-II aminoacyl-tRNA synthetase family. In terms of assembly, homodimer. Requires Zn(2+) as cofactor.

It is found in the cytoplasm. It catalyses the reaction tRNA(Thr) + L-threonine + ATP = L-threonyl-tRNA(Thr) + AMP + diphosphate + H(+). Catalyzes the attachment of threonine to tRNA(Thr) in a two-step reaction: L-threonine is first activated by ATP to form Thr-AMP and then transferred to the acceptor end of tRNA(Thr). Also edits incorrectly charged L-seryl-tRNA(Thr). The protein is Threonine--tRNA ligase of Shewanella sediminis (strain HAW-EB3).